Reading from the N-terminus, the 228-residue chain is Endonuclease V (228 aa).

2 residues coordinate Mg(2+): Asp-36 and Asp-104.

This sequence belongs to the endonuclease V family. Mg(2+) is required as a cofactor.

Its subcellular location is the cytoplasm. The catalysed reaction is Endonucleolytic cleavage at apurinic or apyrimidinic sites to products with a 5'-phosphate.. DNA repair enzyme involved in the repair of deaminated bases. Selectively cleaves double-stranded DNA at the second phosphodiester bond 3' to a deoxyinosine leaving behind the intact lesion on the nicked DNA. This is Endonuclease V from Serratia proteamaculans (strain 568).